A 24-amino-acid chain; its full sequence is Potassium channel toxin alpha-KTx 6 OcyKTx5 (24 aa).

An intrachain disulfide couples Cys3 to Cys24.

The protein belongs to the short scorpion toxin superfamily. Potassium channel inhibitor family. Alpha-KTx 06 subfamily. As to expression, expressed by the venom gland.

The protein localises to the secreted. Blocks voltage-gated potassium channels. The polypeptide is Potassium channel toxin alpha-KTx 6 OcyKTx5 (Opisthacanthus cayaporum (South American scorpion)).